Here is a 240-residue protein sequence, read N- to C-terminus: UDP-2,3-diacylglucosamine hydrolase (240 aa).

Residues aspartate 8, histidine 10, aspartate 41, asparagine 79, and histidine 114 each coordinate Mn(2+). Substrate is bound at residue 79 to 80 (NR). Residues aspartate 122, serine 160, asparagine 164, lysine 167, and histidine 195 each coordinate substrate. Residues histidine 195 and histidine 197 each coordinate Mn(2+).

It belongs to the LpxH family. It depends on Mn(2+) as a cofactor.

The protein resides in the cell inner membrane. The catalysed reaction is UDP-2-N,3-O-bis[(3R)-3-hydroxytetradecanoyl]-alpha-D-glucosamine + H2O = 2-N,3-O-bis[(3R)-3-hydroxytetradecanoyl]-alpha-D-glucosaminyl 1-phosphate + UMP + 2 H(+). It participates in glycolipid biosynthesis; lipid IV(A) biosynthesis; lipid IV(A) from (3R)-3-hydroxytetradecanoyl-[acyl-carrier-protein] and UDP-N-acetyl-alpha-D-glucosamine: step 4/6. Its function is as follows. Hydrolyzes the pyrophosphate bond of UDP-2,3-diacylglucosamine to yield 2,3-diacylglucosamine 1-phosphate (lipid X) and UMP by catalyzing the attack of water at the alpha-P atom. Involved in the biosynthesis of lipid A, a phosphorylated glycolipid that anchors the lipopolysaccharide to the outer membrane of the cell. The sequence is that of UDP-2,3-diacylglucosamine hydrolase from Escherichia coli O7:K1 (strain IAI39 / ExPEC).